A 260-amino-acid chain; its full sequence is 4-hydroxy-tetrahydrodipicolinate reductase (260 aa).

Residues Gly-12 to Met-17, Gly-92 to Thr-94, and Ala-118 to Phe-121 contribute to the NAD(+) site. The active-site Proton donor/acceptor is His-148. His-149 serves as a coordination point for (S)-2,3,4,5-tetrahydrodipicolinate. Catalysis depends on Lys-152, which acts as the Proton donor. (S)-2,3,4,5-tetrahydrodipicolinate is bound at residue Gly-158 to Thr-159.

This sequence belongs to the DapB family.

The protein resides in the cytoplasm. The catalysed reaction is (S)-2,3,4,5-tetrahydrodipicolinate + NAD(+) + H2O = (2S,4S)-4-hydroxy-2,3,4,5-tetrahydrodipicolinate + NADH + H(+). It carries out the reaction (S)-2,3,4,5-tetrahydrodipicolinate + NADP(+) + H2O = (2S,4S)-4-hydroxy-2,3,4,5-tetrahydrodipicolinate + NADPH + H(+). It functions in the pathway amino-acid biosynthesis; L-lysine biosynthesis via DAP pathway; (S)-tetrahydrodipicolinate from L-aspartate: step 4/4. Catalyzes the conversion of 4-hydroxy-tetrahydrodipicolinate (HTPA) to tetrahydrodipicolinate. The chain is 4-hydroxy-tetrahydrodipicolinate reductase from Lactococcus lactis subsp. cremoris (strain SK11).